Here is a 647-residue protein sequence, read N- to C-terminus: Acetyl-coenzyme A synthetase (647 aa).

CoA-binding positions include 190-193, Thr310, and Asn334; that span reads RGGK. ATP contacts are provided by residues 386-388, 410-415, Asp499, and Arg514; these read GEP and DTWWQT. Ser522 lines the CoA pocket. ATP is bound at residue Arg525. Mg(2+)-binding residues include Val536, His538, and Val541. Position 583 (Arg583) interacts with CoA. Lys608 bears the N6-acetyllysine mark.

Belongs to the ATP-dependent AMP-binding enzyme family. Mg(2+) serves as cofactor. Acetylated. Deacetylation by the SIR2-homolog deacetylase activates the enzyme.

It carries out the reaction acetate + ATP + CoA = acetyl-CoA + AMP + diphosphate. Its function is as follows. Catalyzes the conversion of acetate into acetyl-CoA (AcCoA), an essential intermediate at the junction of anabolic and catabolic pathways. AcsA undergoes a two-step reaction. In the first half reaction, AcsA combines acetate with ATP to form acetyl-adenylate (AcAMP) intermediate. In the second half reaction, it can then transfer the acetyl group from AcAMP to the sulfhydryl group of CoA, forming the product AcCoA. In Xanthomonas axonopodis pv. citri (strain 306), this protein is Acetyl-coenzyme A synthetase.